A 528-amino-acid polypeptide reads, in one-letter code: Cytochrome P450 monooxygenase polB (528 aa).

A helical membrane pass occupies residues 3-23 (SFFLVCPVAFLGFTICYLVYV). Position 473 (Cys473) interacts with heme.

Belongs to the cytochrome P450 family. Heme serves as cofactor.

The protein localises to the membrane. It carries out the reaction 4beta-carboxyl motiol + reduced [NADPH--hemoprotein reductase] + O2 = 2alpha-hydroxyl, 4beta-carboxyl motiol + oxidized [NADPH--hemoprotein reductase] + H2O + H(+). The enzyme catalyses 2-deoxypolytolypin + reduced [NADPH--hemoprotein reductase] + O2 = polytolypin + oxidized [NADPH--hemoprotein reductase] + H2O + H(+). It functions in the pathway secondary metabolite biosynthesis; terpenoid biosynthesis. Cytochrome P450 monooxygenase; part of the gene cluster that mediates the biosynthesis of antifungal fernane-type triterpenoid polytolypin. PolB acts as a hydroxylase and installs the 2-alpha-hydroxyl group in polytolypin. Within the pathway, the triterpene cyclase polA first catalyzes the cyclization of 2,3-oxidosqualene to motiol, polC converts the 4-alpha-methyl group of motiol to a carboxyl group, polB is responsible for appending a hydroxyl group at the 2-alpha position and polE is a dual functional P450, which can catalyze the formation of both the 1-beta-hydroxyl group and 10-beta-carboxyl group. This chain is Cytochrome P450 monooxygenase polB, found in Polytolypa hystricis (strain UAMH7299).